The following is a 374-amino-acid chain: MAGLVKAKDYDWKDSNMELFGSSKDRQVKKESAMTEKCWEPVGRATSPFLMVWRVNQFTLEPVPSDEIGNFYNGDSYVICKATRSPGGDKLLYNVHFWIGKHSTADEYGTAAYKTVELDTFLDDAAVQHREVEGYESQLFKSYFDKLVILKVILKGGYASGFRHVKPDEYRPRLLRFCKEGKTTYMRQVAFSKQSVHSGDVFILDLGSRAYQFNGSKCSAFEKSSAAAFLQDLESKRNGRCNTSVLDEADTPQDVGVLHEFWTALPDVPVKELEPPKEVIKSLYKLSDSSGKLELTIVSEGSASKHDIKPDDVYIILTKEGLFVYIGKDCSVLEKRNALSNAHKFLQTCPNPFLPITVVTDEQAESFLKGIWDE.

Gelsolin-like repeat units follow at residues 58–109 (FTLE…DEYG), 180–220 (EGKT…KCSA), and 278–369 (EVIK…SFLK).

Belongs to the villin/gelsolin family.

Severin blocks the ends of F-actin and causes the fragmentation and depolymerization of actin filaments. This severin binds stably with actin both in a Ca(2+) dependent and a Ca(2+) independent manner. The polypeptide is Severin (AG8) (Echinococcus granulosus (Hydatid tapeworm)).